A 94-amino-acid chain; its full sequence is Large ribosomal subunit protein bL25 (94 aa).

It belongs to the bacterial ribosomal protein bL25 family. As to quaternary structure, part of the 50S ribosomal subunit; part of the 5S rRNA/L5/L18/L25 subcomplex. Contacts the 5S rRNA. Binds to the 5S rRNA independently of L5 and L18.

In terms of biological role, this is one of the proteins that binds to the 5S RNA in the ribosome where it forms part of the central protuberance. This Erwinia tasmaniensis (strain DSM 17950 / CFBP 7177 / CIP 109463 / NCPPB 4357 / Et1/99) protein is Large ribosomal subunit protein bL25.